Here is a 588-residue protein sequence, read N- to C-terminus: MMRTHYCGALNRNNIGQDVTLSGWVHRRRDLGGLIFIDMRDRDGIVQVYFDPKYQDALTAAASLRNEFCIQIKGEVIARPENQINKNMATGEVEVLAKELRIYNASDVLPLDFNQNNTEEQRLKYRYLDLRRPEMAQRLKTRAKITSFVRRFMDDNGFLDIETPMLTKATPEGARDYLVPSRVHKGKFYALPQSPQLFKQLLMMSGFDRYYQIVKCFRDEDLRADRQPEFTQIDVETSFLTAPEVREIMERMVHGLWLDTIGVDLGKFPVMTWQEAMCRFGSDKPDLRNPLEMVDVADIVKDVEFKVFNEPANNPNGRVAVIRVPNGAEITRKQIDEYTQFVGIYGAKGLAWAKVNDINVGLEGVQSPIAKFLNEEVWKALAERVNAQTGDILFFGADKWQTTTDAMGALRLKLGRDLGLTRLDEWQPLWVIDFPMFERDEEGNLAAMHHPFTSPKDFSPEQLEADPTSAVANAYDMVINGYEVGGGSVRIFDPKMQQTVFRILGIDEEQQREKFGFLLDALKFGTPPHAGLAFGLDRLTMLLTGTENIRDVIAFPKTTAAACLMTEAPSFANPQALEELAISVVKAE.

L-aspartate is bound at residue glutamate 172. Residues 196 to 199 are aspartate; it reads QLFK. Arginine 218 provides a ligand contact to L-aspartate. Residues 218-220 and glutamine 227 each bind ATP; that span reads RDE. Histidine 449 serves as a coordination point for L-aspartate. Glutamate 483 provides a ligand contact to ATP. Arginine 490 contributes to the L-aspartate binding site. 535 to 538 serves as a coordination point for ATP; the sequence is GLDR.

Belongs to the class-II aminoacyl-tRNA synthetase family. Type 1 subfamily. In terms of assembly, homodimer.

It is found in the cytoplasm. It catalyses the reaction tRNA(Asp) + L-aspartate + ATP = L-aspartyl-tRNA(Asp) + AMP + diphosphate. Catalyzes the attachment of L-aspartate to tRNA(Asp) in a two-step reaction: L-aspartate is first activated by ATP to form Asp-AMP and then transferred to the acceptor end of tRNA(Asp). The protein is Aspartate--tRNA ligase of Haemophilus influenzae (strain PittGG).